We begin with the raw amino-acid sequence, 66 residues long: Large ribosomal subunit protein bL33 (66 aa).

It belongs to the bacterial ribosomal protein bL33 family.

In Wolbachia pipientis wMel, this protein is Large ribosomal subunit protein bL33.